Consider the following 498-residue polypeptide: MSDVVSVGFVPMSTSAKGLLVVFCDETLASGPDSRKALGTAVDAVKRAAETSRFKGKSGAALDILAPEGLKASRLVVIGIGKPADLKEHDFLKLGGTIASKLGSGKEAVTVIAELPAGPMSPAQAAALAAGVRLRAYKFDRYKTKKKDDDAPLDASVAIAVRDVAATKKAFAPQNGLVDGVNIARELVNEPPNVLYPAEFARRASQLSKLGVGIEVLDVPAMTKLKMGALLGVAQGSARPARTVIMRWNGGKKGAAPIAFVGKGVCFDTGGISIKPSASMEDMKGDMGGAACVVGLMHALAARKAKVNVIGAIGLVENMPDGNAQRPGDIVTSMSGQTIEIINTDAEGRLVLADVLWYVAKKHKPKFMVDLATLTGAIMVALGTEYAGLFSNNDELATRLNEVGLATGERVWRMPLGPEYDKQIDSQFADMKNTGSRNGGSITAAQFLQRFVDDTPWAHLDIAGTAMASPKSDINQSWGSGYGVRLLDRLVATHYESK.

Positions 263 and 268 each coordinate Mn(2+). K275 is a catalytic residue. Mn(2+)-binding residues include D286, D345, and E347. Residue R349 is part of the active site.

It belongs to the peptidase M17 family. It depends on Mn(2+) as a cofactor.

It localises to the cytoplasm. The catalysed reaction is Release of an N-terminal amino acid, Xaa-|-Yaa-, in which Xaa is preferably Leu, but may be other amino acids including Pro although not Arg or Lys, and Yaa may be Pro. Amino acid amides and methyl esters are also readily hydrolyzed, but rates on arylamides are exceedingly low.. The enzyme catalyses Release of an N-terminal amino acid, preferentially leucine, but not glutamic or aspartic acids.. Functionally, presumably involved in the processing and regular turnover of intracellular proteins. Catalyzes the removal of unsubstituted N-terminal amino acids from various peptides. The chain is Probable cytosol aminopeptidase from Rhodopseudomonas palustris (strain BisA53).